We begin with the raw amino-acid sequence, 377 residues long: Succinyl-diaminopimelate desuccinylase (377 aa).

Residue His67 coordinates Zn(2+). Asp69 is a catalytic residue. Asp100 is a Zn(2+) binding site. The active-site Proton acceptor is the Glu134. Positions 135, 163, and 349 each coordinate Zn(2+).

This sequence belongs to the peptidase M20A family. DapE subfamily. In terms of assembly, homodimer. Zn(2+) serves as cofactor. Co(2+) is required as a cofactor.

It catalyses the reaction N-succinyl-(2S,6S)-2,6-diaminopimelate + H2O = (2S,6S)-2,6-diaminopimelate + succinate. The protein operates within amino-acid biosynthesis; L-lysine biosynthesis via DAP pathway; LL-2,6-diaminopimelate from (S)-tetrahydrodipicolinate (succinylase route): step 3/3. Functionally, catalyzes the hydrolysis of N-succinyl-L,L-diaminopimelic acid (SDAP), forming succinate and LL-2,6-diaminopimelate (DAP), an intermediate involved in the bacterial biosynthesis of lysine and meso-diaminopimelic acid, an essential component of bacterial cell walls. This chain is Succinyl-diaminopimelate desuccinylase, found in Glaesserella parasuis serovar 5 (strain SH0165) (Haemophilus parasuis).